A 101-amino-acid polypeptide reads, in one-letter code: Small ribosomal subunit protein uS14 (101 aa).

It belongs to the universal ribosomal protein uS14 family. In terms of assembly, part of the 30S ribosomal subunit. Contacts proteins S3 and S10.

Binds 16S rRNA, required for the assembly of 30S particles and may also be responsible for determining the conformation of the 16S rRNA at the A site. In Ruegeria pomeroyi (strain ATCC 700808 / DSM 15171 / DSS-3) (Silicibacter pomeroyi), this protein is Small ribosomal subunit protein uS14.